Reading from the N-terminus, the 402-residue chain is Formate-dependent phosphoribosylglycinamide formyltransferase (402 aa).

Residues 23–24 (EL) and Glu-83 contribute to the N(1)-(5-phospho-beta-D-ribosyl)glycinamide site. Residues Arg-116, Lys-157, 162–167 (SSGKGQ), 197–200 (ESQI), and Glu-205 contribute to the ATP site. Residues 121–316 (RLAAEELGLP…EFELHARAIL (196 aa)) form the ATP-grasp domain. Positions 275 and 287 each coordinate Mg(2+). Residues Asp-294, Lys-363, and 370-371 (RR) each bind N(1)-(5-phospho-beta-D-ribosyl)glycinamide.

Belongs to the PurK/PurT family. As to quaternary structure, homodimer.

It carries out the reaction N(1)-(5-phospho-beta-D-ribosyl)glycinamide + formate + ATP = N(2)-formyl-N(1)-(5-phospho-beta-D-ribosyl)glycinamide + ADP + phosphate + H(+). Its pathway is purine metabolism; IMP biosynthesis via de novo pathway; N(2)-formyl-N(1)-(5-phospho-D-ribosyl)glycinamide from N(1)-(5-phospho-D-ribosyl)glycinamide (formate route): step 1/1. Its function is as follows. Involved in the de novo purine biosynthesis. Catalyzes the transfer of formate to 5-phospho-ribosyl-glycinamide (GAR), producing 5-phospho-ribosyl-N-formylglycinamide (FGAR). Formate is provided by PurU via hydrolysis of 10-formyl-tetrahydrofolate. The sequence is that of Formate-dependent phosphoribosylglycinamide formyltransferase from Acinetobacter baumannii (strain ATCC 17978 / DSM 105126 / CIP 53.77 / LMG 1025 / NCDC KC755 / 5377).